Consider the following 673-residue polypeptide: Glycine--tRNA ligase beta subunit (673 aa).

This sequence belongs to the class-II aminoacyl-tRNA synthetase family. In terms of assembly, tetramer of two alpha and two beta subunits.

The protein resides in the cytoplasm. It carries out the reaction tRNA(Gly) + glycine + ATP = glycyl-tRNA(Gly) + AMP + diphosphate. The polypeptide is Glycine--tRNA ligase beta subunit (Lactococcus lactis subsp. cremoris (strain SK11)).